The sequence spans 105 residues: MKSHKMMGGGISMHYITACLKIISDKDLNEIMKEFKKLEEETNKEEGCITFHAYPLEPSERKIMLWEIWENEEAVKIHFTKKHTIDVQKQELTEVEWLMKSNVND.

The region spanning 14–104 (HYITACLKII…VEWLMKSNVN (91 aa)) is the ABM domain.

This is an uncharacterized protein from Bacillus subtilis (strain 168).